Consider the following 662-residue polypeptide: Rap guanine nucleotide exchange factor-like 1 (662 aa).

The disordered stretch occupies residues Met-1–Glu-149. Positions Val-20–Gly-48 are enriched in gly residues. Positions Gly-49–Leu-64 are enriched in low complexity. Residues Ala-73 to Pro-82 are compositionally biased toward pro residues. A compositionally biased stretch (low complexity) spans Leu-120–Glu-135. One can recognise a Ras-GEF domain in the interval Glu-424–Asn-660.

Functionally, probable guanine nucleotide exchange factor (GEF). The protein is Rap guanine nucleotide exchange factor-like 1 (RAPGEFL1) of Homo sapiens (Human).